Here is a 267-residue protein sequence, read N- to C-terminus: MSFDVYVMRVFGKSRGSWEAGMGVSAGLEVAAGSVASALAAQEGGAMRVELCHGLEGGGLTPSYGMLAVVRERLHIPLYVLIRPRGGDFVFSEEEMEVMCGDVECCVRLGCDGVVLGALDPAGEVDMGMMRVLIAAAGSLGVTFHRAIDVSADPGRTLEDVIALGCERVLTSGGRSSALEGAETIAALVAQAAGRVVVMPGAGVSAGNVLELRVRTGAHEFHASARSVVAARRLGAHPYIHDLGGDYDCTDADKVRQLVRLLSQGAS.

It belongs to the CutC family.

It localises to the cytoplasm. The chain is PF03932 family protein CutC from Xylella fastidiosa (strain Temecula1 / ATCC 700964).